Here is a 513-residue protein sequence, read N- to C-terminus: PPE family protein PPE4 (513 aa).

3 consecutive transmembrane segments (helical) span residues 233–253 (IIIAFLTNPIQALITYGPLLF), 277–297 (FLLPAGLGLGLAAIAFLPIVL), and 309–329 (LAAAAVAAGSVWPAVSMAVTG). 2 disordered regions span residues 395–446 (AAAA…ERGA) and 469–513 (LAGD…HDSK).

This sequence belongs to the mycobacterial PPE family.

It localises to the cell membrane. Functionally, important for the siderophore-mediated iron-acquisition function of ESX-3. This Mycobacterium tuberculosis (strain CDC 1551 / Oshkosh) protein is PPE family protein PPE4 (PPE4).